Consider the following 232-residue polypeptide: tRNA (guanine-N(1)-)-methyltransferase (232 aa).

Residues glycine 111 and 131 to 136 each bind S-adenosyl-L-methionine; that span reads IGDYIL.

The protein belongs to the RNA methyltransferase TrmD family. As to quaternary structure, homodimer.

It localises to the cytoplasm. It carries out the reaction guanosine(37) in tRNA + S-adenosyl-L-methionine = N(1)-methylguanosine(37) in tRNA + S-adenosyl-L-homocysteine + H(+). Its function is as follows. Specifically methylates guanosine-37 in various tRNAs. In Bartonella quintana (strain Toulouse) (Rochalimaea quintana), this protein is tRNA (guanine-N(1)-)-methyltransferase.